The chain runs to 584 residues: Probable pectinesterase/pectinesterase inhibitor (584 aa).

The signal sequence occupies residues 1–22; it reads MAVGKIVISVASMLLVVGVAIG. Positions 40–191 are pectinesterase inhibitor; the sequence is NSHQKAVESL…KILSSNAIDI (152 aa). Residues Asn-91 and Asn-105 are each glycosylated (N-linked (GlcNAc...) asparagine). The tract at residues 246 to 267 is disordered; it reads AQAGRPGAPADEGIGEGGGGGG. The segment at 272–571 is pectinesterase; sequence THVVAKDGSG…TVANWLTPAN (300 aa). Positions 349 and 379 each coordinate substrate. Asp-402 functions as the Proton donor; for pectinesterase activity in the catalytic mechanism. Asp-423 (nucleophile; for pectinesterase activity) is an active-site residue. Positions 492 and 494 each coordinate substrate.

This sequence in the N-terminal section; belongs to the PMEI family. It in the C-terminal section; belongs to the pectinesterase family. As to expression, pollen, and at much lower levels in pistils and petals.

The protein resides in the secreted. It is found in the cell wall. The catalysed reaction is [(1-&gt;4)-alpha-D-galacturonosyl methyl ester](n) + n H2O = [(1-&gt;4)-alpha-D-galacturonosyl](n) + n methanol + n H(+). Its pathway is glycan metabolism; pectin degradation; 2-dehydro-3-deoxy-D-gluconate from pectin: step 1/5. Its function is as follows. Acts in the modification of cell walls via demethylesterification of cell wall pectin. This Brassica napus (Rape) protein is Probable pectinesterase/pectinesterase inhibitor (BP19).